The chain runs to 249 residues: Adenylate kinase (249 aa).

43–48 is an ATP binding site; the sequence is GAGKGT. Positions 63 to 92 are NMP; sequence ATGDMLRAQVAAKTALGVEAKKIMDQGGLV. AMP contacts are provided by residues Thr64, Arg69, 90-92, 119-122, and Gln126; these read GLV and GFPR. The LID stretch occupies residues 160-197; sequence GRLVHPASGRSYHKLFNPPKKDMTDDVTGEPLVQRSDD. Residues Arg161 and 170–171 each bind ATP; that span reads SY. A disordered region spans residues 177–197; it reads PPKKDMTDDVTGEPLVQRSDD. AMP is bound by residues Arg194 and Arg205. Residue Gln233 coordinates ATP.

Belongs to the adenylate kinase family. AK2 subfamily. Monomer.

Its subcellular location is the cytoplasm. It localises to the cytosol. It is found in the mitochondrion intermembrane space. It catalyses the reaction AMP + ATP = 2 ADP. Catalyzes the reversible transfer of the terminal phosphate group between ATP and AMP. Plays an important role in cellular energy homeostasis and in adenine nucleotide metabolism. Adenylate kinase activity is critical for regulation of the phosphate utilization and the AMP de novo biosynthesis pathways. This is Adenylate kinase from Candida albicans (strain SC5314 / ATCC MYA-2876) (Yeast).